The sequence spans 172 residues: 3-hydroxydecanoyl-[acyl-carrier-protein] dehydratase (172 aa).

The active site involves H71.

The protein belongs to the thioester dehydratase family. FabA subfamily. As to quaternary structure, homodimer.

Its subcellular location is the cytoplasm. It carries out the reaction a (3R)-hydroxyacyl-[ACP] = a (2E)-enoyl-[ACP] + H2O. It catalyses the reaction (3R)-hydroxydecanoyl-[ACP] = (2E)-decenoyl-[ACP] + H2O. The catalysed reaction is (2E)-decenoyl-[ACP] = (3Z)-decenoyl-[ACP]. It functions in the pathway lipid metabolism; fatty acid biosynthesis. Necessary for the introduction of cis unsaturation into fatty acids. Catalyzes the dehydration of (3R)-3-hydroxydecanoyl-ACP to E-(2)-decenoyl-ACP and then its isomerization to Z-(3)-decenoyl-ACP. Can catalyze the dehydratase reaction for beta-hydroxyacyl-ACPs with saturated chain lengths up to 16:0, being most active on intermediate chain length. This is 3-hydroxydecanoyl-[acyl-carrier-protein] dehydratase from Erwinia tasmaniensis (strain DSM 17950 / CFBP 7177 / CIP 109463 / NCPPB 4357 / Et1/99).